The primary structure comprises 585 residues: CTP synthase (585 aa).

Positions 1–281 are amidoligase domain; the sequence is MPALRKHPHT…DAYVVRRLNL (281 aa). CTP is bound at residue serine 23. A UTP-binding site is contributed by serine 23. ATP is bound by residues 24–29 and aspartate 81; that span reads SLGKGL. Positions 81 and 155 each coordinate Mg(2+). Residues 162–164, 202–207, and lysine 238 each bind CTP; these read DIE and KTKPTQ. UTP-binding positions include 202-207 and lysine 238; that span reads KTKPTQ. In terms of domain architecture, Glutamine amidotransferase type-1 spans 306–554; the sequence is RIALVGKYID…VGAAVEYNNG (249 aa). Glycine 369 is an L-glutamine binding site. The active-site Nucleophile; for glutamine hydrolysis is the cysteine 396. L-glutamine-binding positions include 397–400, glutamate 419, and arginine 480; that span reads LGLQ. Residues histidine 527 and glutamate 529 contribute to the active site. The disordered stretch occupies residues 564 to 585; the sequence is IPTADHQSNGAEHALEDAPARG. The span at 576–585 shows a compositional bias: basic and acidic residues; sequence HALEDAPARG.

This sequence belongs to the CTP synthase family. Homotetramer.

The catalysed reaction is UTP + L-glutamine + ATP + H2O = CTP + L-glutamate + ADP + phosphate + 2 H(+). It catalyses the reaction L-glutamine + H2O = L-glutamate + NH4(+). It carries out the reaction UTP + NH4(+) + ATP = CTP + ADP + phosphate + 2 H(+). It participates in pyrimidine metabolism; CTP biosynthesis via de novo pathway; CTP from UDP: step 2/2. Its activity is regulated as follows. Allosterically activated by GTP, when glutamine is the substrate; GTP has no effect on the reaction when ammonia is the substrate. The allosteric effector GTP functions by stabilizing the protein conformation that binds the tetrahedral intermediate(s) formed during glutamine hydrolysis. Inhibited by the product CTP, via allosteric rather than competitive inhibition. In terms of biological role, catalyzes the ATP-dependent amination of UTP to CTP with either L-glutamine or ammonia as the source of nitrogen. Regulates intracellular CTP levels through interactions with the four ribonucleotide triphosphates. The chain is CTP synthase from Mycolicibacterium gilvum (strain PYR-GCK) (Mycobacterium gilvum (strain PYR-GCK)).